The sequence spans 163 residues: Cyclic pyranopterin monophosphate synthase (163 aa).

Residues 78–80 (LCH) and 116–117 (ME) contribute to the substrate site. The active site involves D131.

Belongs to the MoaC family. Homohexamer; trimer of dimers.

The enzyme catalyses (8S)-3',8-cyclo-7,8-dihydroguanosine 5'-triphosphate = cyclic pyranopterin phosphate + diphosphate. It functions in the pathway cofactor biosynthesis; molybdopterin biosynthesis. In terms of biological role, catalyzes the conversion of (8S)-3',8-cyclo-7,8-dihydroguanosine 5'-triphosphate to cyclic pyranopterin monophosphate (cPMP). The sequence is that of Cyclic pyranopterin monophosphate synthase from Agrobacterium fabrum (strain C58 / ATCC 33970) (Agrobacterium tumefaciens (strain C58)).